A 154-amino-acid polypeptide reads, in one-letter code: Small ribosomal subunit protein bS16 (154 aa).

The interval 82–154 (VQERAARSNP…EAAAEESTEA (73 aa)) is disordered. Residues 92–109 (KKAEPGEKAKERAEERAA) are compositionally biased toward basic and acidic residues. The span at 110–129 (KLAAAEEAANAPAEEPAAEP) shows a compositional bias: low complexity. The segment covering 142 to 154 (PAEEAAAEESTEA) has biased composition (acidic residues).

This sequence belongs to the bacterial ribosomal protein bS16 family.

The chain is Small ribosomal subunit protein bS16 from Rhizorhabdus wittichii (strain DSM 6014 / CCUG 31198 / JCM 15750 / NBRC 105917 / EY 4224 / RW1) (Sphingomonas wittichii).